A 1284-amino-acid polypeptide reads, in one-letter code: DNA topoisomerase 2, mitochondrial (1284 aa).

Residues 1–35 constitute a mitochondrion transit peptide; the sequence is MSKLLNNNNHKNLTNYLKFGKGIINNLNNKSKQVG. Residues Asn183, Asn212, 240–242, and 253–260 each bind ATP; these read GSN and GRNGFGAK. An interaction with DNA region spans residues 445-447; sequence KKK. 478–480 serves as a coordination point for ATP; the sequence is QSK. The region spanning 560–677 is the Toprim domain; sequence CTLIITEGDS…NLLKRGFLVE (118 aa). Positions 566, 646, and 648 each coordinate Mg(2+). One can recognise a Topo IIA-type catalytic domain in the interval 810–1232; sequence IPSLIDGLKP…DPKSLWTADL (423 aa). The active-site O-(5'-phospho-DNA)-tyrosine intermediate is Tyr900. The interval 1245–1284 is disordered; the sequence is EFQKKPLKTSSSSSFDVSSSSESAKLSSTRKSKTDKIKSK. Positions 1254 to 1271 are enriched in low complexity; it reads SSSSSFDVSSSSESAKLS.

Belongs to the type II topoisomerase family. As to quaternary structure, homodimer. The cofactor is Mg(2+). Requires Mn(2+) as cofactor. It depends on Ca(2+) as a cofactor.

Its subcellular location is the mitochondrion. The catalysed reaction is ATP-dependent breakage, passage and rejoining of double-stranded DNA.. Control of topological states of DNA by transient breakage and subsequent rejoining of DNA strands. Topoisomerase II makes double-strand breaks. This chain is DNA topoisomerase 2, mitochondrial (top2mt), found in Dictyostelium discoideum (Social amoeba).